A 244-amino-acid chain; its full sequence is Tyrosine recombinase XerD-like (244 aa).

The region spanning 1–73 is the Core-binding (CB) domain; it reads MRDRISAFLE…ACNQFLYFLY (73 aa). The 155-residue stretch at 90-244 folds into the Tyr recombinase domain; the sequence is AEKKTEKPEI…KTVLTLEKYR (155 aa). Residues Lys-150 and Arg-211 contribute to the active site. Residue Tyr-243 is the O-(3'-phospho-DNA)-tyrosine intermediate of the active site.

The protein belongs to the 'phage' integrase family. XerD-like subfamily.

Its subcellular location is the cytoplasm. In terms of biological role, putative tyrosine recombinase. Not involved in the cutting and rejoining of the recombining DNA molecules on dif(SL) site. In Streptococcus pneumoniae (strain Hungary19A-6), this protein is Tyrosine recombinase XerD-like.